The sequence spans 275 residues: Membrane protein insertase MisCB (275 aa).

Residues 1 to 18 (MLKTYQKLLAMGIFLIVL) form the signal peptide. Cysteine 19 carries the N-palmitoyl cysteine lipid modification. A lipid anchor (S-diacylglycerol cysteine) is attached at cysteine 19. 5 consecutive transmembrane segments (helical) span residues 63–83 (YGLS…PLFV), 139–159 (AMGC…YYAI), 172–192 (WFSL…MYFV), 219–239 (LMVF…PAAL), and 240–260 (PLYW…LQMT).

This sequence belongs to the OXA1/ALB3/YidC family. Type 2 subfamily. In terms of assembly, mostly monomeric, it may also form dimers. Interacts with SpoIIIAE. Forms a complex with the F(1)F(0) ATP synthase in which can be found the alpha, beta, gamma, delta and epsilon subunits of F(1) and a, b and subunits of F(0). YqgA is found in the same complex.

It is found in the cell membrane. Required for the insertion and/or proper folding and/or complex formation of integral membrane proteins into the membrane. Involved in integration of membrane proteins that insert both dependently and independently of the Sec translocase complex, as well as at least some lipoproteins. Also involved in protein secretion processes. It has an overlapping, although partly distinct, function compared to SpoIIIJ(MisCB). This chain is Membrane protein insertase MisCB (misCB), found in Bacillus subtilis (strain 168).